The sequence spans 308 residues: Ornithine carbamoyltransferase (308 aa).

Residues 56 to 59 (STRT), Gln83, Arg107, and 134 to 137 (HPCQ) contribute to the carbamoyl phosphate site. Residues Asn165, Asp225, and 229-230 (SM) each bind L-ornithine. Carbamoyl phosphate is bound by residues 266-267 (CL) and Arg294.

It belongs to the aspartate/ornithine carbamoyltransferase superfamily. OTCase family.

The protein resides in the cytoplasm. The enzyme catalyses carbamoyl phosphate + L-ornithine = L-citrulline + phosphate + H(+). It functions in the pathway amino-acid biosynthesis; L-arginine biosynthesis; L-arginine from L-ornithine and carbamoyl phosphate: step 1/3. Its function is as follows. Reversibly catalyzes the transfer of the carbamoyl group from carbamoyl phosphate (CP) to the N(epsilon) atom of ornithine (ORN) to produce L-citrulline. The chain is Ornithine carbamoyltransferase from Paracoccus denitrificans (strain Pd 1222).